A 270-amino-acid polypeptide reads, in one-letter code: tRNA pseudouridine synthase A (270 aa).

The active-site Nucleophile is the D54. Y112 contributes to the substrate binding site.

It belongs to the tRNA pseudouridine synthase TruA family. Homodimer.

The catalysed reaction is uridine(38/39/40) in tRNA = pseudouridine(38/39/40) in tRNA. In terms of biological role, formation of pseudouridine at positions 38, 39 and 40 in the anticodon stem and loop of transfer RNAs. This Bordetella bronchiseptica (strain ATCC BAA-588 / NCTC 13252 / RB50) (Alcaligenes bronchisepticus) protein is tRNA pseudouridine synthase A.